The primary structure comprises 124 residues: Small ribosomal subunit protein uS12 (124 aa).

Residues 9-28 (RTERQTLSRKTKSPALRSCP) are disordered. A 3-methylthioaspartic acid modification is found at D89. The tract at residues 104–124 (TAGVKDRRQSRSKYGAKAPKE) is disordered.

This sequence belongs to the universal ribosomal protein uS12 family. As to quaternary structure, part of the 30S ribosomal subunit. Contacts proteins S8 and S17. May interact with IF1 in the 30S initiation complex.

In terms of biological role, with S4 and S5 plays an important role in translational accuracy. Functionally, interacts with and stabilizes bases of the 16S rRNA that are involved in tRNA selection in the A site and with the mRNA backbone. Located at the interface of the 30S and 50S subunits, it traverses the body of the 30S subunit contacting proteins on the other side and probably holding the rRNA structure together. The combined cluster of proteins S8, S12 and S17 appears to hold together the shoulder and platform of the 30S subunit. This chain is Small ribosomal subunit protein uS12, found in Synechococcus sp. (strain RCC307).